The primary structure comprises 197 residues: Dephospho-CoA kinase (197 aa).

The 195-residue stretch at valine 3–serine 197 folds into the DPCK domain. Glycine 11–threonine 16 is a binding site for ATP.

This sequence belongs to the CoaE family.

It is found in the cytoplasm. It catalyses the reaction 3'-dephospho-CoA + ATP = ADP + CoA + H(+). It functions in the pathway cofactor biosynthesis; coenzyme A biosynthesis; CoA from (R)-pantothenate: step 5/5. Its function is as follows. Catalyzes the phosphorylation of the 3'-hydroxyl group of dephosphocoenzyme A to form coenzyme A. This Mesorhizobium japonicum (strain LMG 29417 / CECT 9101 / MAFF 303099) (Mesorhizobium loti (strain MAFF 303099)) protein is Dephospho-CoA kinase.